We begin with the raw amino-acid sequence, 237 residues long: Sugar fermentation stimulation protein homolog (237 aa).

It belongs to the SfsA family.

The chain is Sugar fermentation stimulation protein homolog from Pseudomonas fluorescens (strain ATCC BAA-477 / NRRL B-23932 / Pf-5).